The following is a 251-amino-acid chain: Core protein VP8 (251 aa).

Positions 1–32 are cleaved as a propeptide — removed by core protease OPG083; it reads MSLLLENLIEEDTIFFAGSISEYDDLQMVIAG.

This sequence belongs to the orthopoxvirus OPG098 family. In terms of processing, undergoes morphogenesis-associated proteolysis which cleaves the 28 kDa to a 25-kDa product. Proteolytic cleavage of major core proteins P4a (OPG136), P4b (OPG129), and VP8 (OPG098), which occurs at a late stage of core formation, is required for production of infectious mature virions (MV).

It is found in the virion. Its subcellular location is the host cytoplasm. In terms of biological role, major core structural protein. This Monkeypox virus protein is Core protein VP8 (OPG098).